A 640-amino-acid polypeptide reads, in one-letter code: MAESEGSNTENGKVGAVKSENLDRGVAAIKNQFLTTKEKFHAFIDADGKDVTEKETCSELSLNDAENTTRTENAAEPEAKRIKLDDGSSEGQDQPPKTAENKQEKKRARGQNKSRPHMKHSQFEENKLCPSVTQECASKCFFGDKCKFSHDVAKYVSQKPEDIRPNCHLYETFGKCIYGVTCRFAKSHLGEDFKNIINEELMKEWEGKVLVKNSLDKSLKEQLRKKKVVFEKSDKYLKLCFKSGDSSKMKNPVVKEDSAVQVTQKDSPITTVGAVTDEDVIKLRPCEKKTIDFRNKLYLAPLTTCGNLPFRRICKRLGADITCGEMAMCTNLLQGQPSEWALLKRHHSEDIFGVQLEGAFPDTMTKCAELLNRTIDVDFVDINVGCPIDLVYKKGGGCGLMNRTNKFEQIVKGMNSVLDVPLTVKIRTGVQEKVNIAHKLIPNLRDWGVSLVTLHGRSREQRYTKLANWEYIDQCAKIASPVPLFGNGDIISYEDANRALQTGVAGVMLARGALFKPWLFTEIKEQRHWDISSTERFDILKDFTNYGLEHWGSDCQGVEKTRKFMLEWLSFLCRYIPVGLLEHVPQKINERPPYYMGRDYLETLMASQNVTDWIKISEMLLGPVPPNFTFLPKHKANSYK.

Over residues 1-11 the composition is skewed to polar residues; it reads MAESEGSNTEN. Disordered regions lie at residues 1 to 23 and 43 to 123; these read MAES…ENLD and FIDA…HSQF. Residues 43–57 show a composition bias toward basic and acidic residues; it reads FIDADGKDVTEKETC. Over residues 58-72 the composition is skewed to polar residues; the sequence is SELSLNDAENTTRTE. Positions 77-86 are enriched in basic and acidic residues; that stretch reads PEAKRIKLDD. Residues 104-120 are compositionally biased toward basic residues; it reads EKKRARGQNKSRPHMKH. 2 C3H1-type zinc fingers span residues 123-153 and 161-191; these read FEEN…HDVA and EDIR…HLGE. FMN is bound by residues 301 to 303 and glutamine 355; that span reads PLT. Residue cysteine 386 is the Proton donor of the active site. FMN-binding positions include lysine 425, histidine 455, 487–489, and 510–511; these read NGD and AR.

Belongs to the Dus family. Dus3 subfamily. Requires FMN as cofactor.

The enzyme catalyses 5,6-dihydrouridine(47) in tRNA + NAD(+) = uridine(47) in tRNA + NADH + H(+). It catalyses the reaction 5,6-dihydrouridine(47) in tRNA + NADP(+) = uridine(47) in tRNA + NADPH + H(+). It carries out the reaction a 5,6-dihydrouridine in mRNA + NAD(+) = a uridine in mRNA + NADH + H(+). The catalysed reaction is a 5,6-dihydrouridine in mRNA + NADP(+) = a uridine in mRNA + NADPH + H(+). Functionally, catalyzes the synthesis of dihydrouridine, a modified base, in various RNAs, such as tRNAs, mRNAs and some long non-coding RNAs (lncRNAs). Mainly modifies the uridine in position 47 (U47) in the D-loop of most cytoplasmic tRNAs. Also able to mediate the formation of dihydrouridine in some mRNAs, thereby regulating their translation. This is tRNA-dihydrouridine(47) synthase [NAD(P)(+)]-like (dus3l) from Xenopus laevis (African clawed frog).